The chain runs to 208 residues: Uracil phosphoribosyltransferase (208 aa).

5-phospho-alpha-D-ribose 1-diphosphate is bound by residues Arg78, Arg103, and 130–138 (DPMLATGGS). Residues Ile193 and 198–200 (GDA) each bind uracil. Asp199 contributes to the 5-phospho-alpha-D-ribose 1-diphosphate binding site.

Belongs to the UPRTase family. Mg(2+) serves as cofactor.

It catalyses the reaction UMP + diphosphate = 5-phospho-alpha-D-ribose 1-diphosphate + uracil. The protein operates within pyrimidine metabolism; UMP biosynthesis via salvage pathway; UMP from uracil: step 1/1. With respect to regulation, allosterically activated by GTP. Functionally, catalyzes the conversion of uracil and 5-phospho-alpha-D-ribose 1-diphosphate (PRPP) to UMP and diphosphate. This Haemophilus influenzae (strain 86-028NP) protein is Uracil phosphoribosyltransferase.